The following is a 464-amino-acid chain: NADH dehydrogenase [ubiquinone] flavoprotein 1, mitochondrial (464 aa).

A mitochondrion-targeting transit peptide spans 1–20 (MLAARRLLGWSLPARVSVRF). Position 81 is an N6-acetyllysine; alternate (Lys81). The residue at position 81 (Lys81) is an N6-succinyllysine; alternate. 87 to 96 (GRGGAGFPTG) contacts NADH. Position 104 is an N6-acetyllysine (Lys104). An FMN-binding site is contributed by 199–247 (RGAGAYICGEETALIESIEGKQGKPRLKPPFPADVGVFGCPTTVANVET). Arg257 is subject to Omega-N-methylarginine. Position 375 is an N6-acetyllysine (Lys375). [4Fe-4S] cluster contacts are provided by Cys379, Cys382, Cys385, and Cys425.

Belongs to the complex I 51 kDa subunit family. Core subunit of respiratory chain NADH dehydrogenase (Complex I) which is composed of 45 different subunits. This is a component of the flavoprotein-sulfur (FP) fragment of the enzyme. Interacts with RAB5IF. Requires FMN as cofactor. The cofactor is [4Fe-4S] cluster.

It is found in the mitochondrion inner membrane. It catalyses the reaction a ubiquinone + NADH + 5 H(+)(in) = a ubiquinol + NAD(+) + 4 H(+)(out). Functionally, core subunit of the mitochondrial membrane respiratory chain NADH dehydrogenase (Complex I) which catalyzes electron transfer from NADH through the respiratory chain, using ubiquinone as an electron acceptor. Part of the peripheral arm of the enzyme, where the electrons from NADH are accepted by flavin mononucleotide (FMN) and then passed along a chain of iron-sulfur clusters by electron tunnelling to the final acceptor ubiquinone. Contains FMN, which is the initial electron acceptor as well as one iron-sulfur cluster. In Pongo pygmaeus (Bornean orangutan), this protein is NADH dehydrogenase [ubiquinone] flavoprotein 1, mitochondrial.